The primary structure comprises 191 residues: Potassium-transporting ATPase KdpC subunit (191 aa).

The chain crosses the membrane as a helical span at residues 10-30; it reads ITLVFCVFFSVFYILVLWLFA.

It belongs to the KdpC family. As to quaternary structure, the system is composed of three essential subunits: KdpA, KdpB and KdpC.

The protein resides in the cell inner membrane. Part of the high-affinity ATP-driven potassium transport (or Kdp) system, which catalyzes the hydrolysis of ATP coupled with the electrogenic transport of potassium into the cytoplasm. This subunit acts as a catalytic chaperone that increases the ATP-binding affinity of the ATP-hydrolyzing subunit KdpB by the formation of a transient KdpB/KdpC/ATP ternary complex. This is Potassium-transporting ATPase KdpC subunit from Bacteroides fragilis (strain YCH46).